Consider the following 362-residue polypeptide: Cobalt-precorrin-5B C(1)-methyltransferase (362 aa).

The protein belongs to the CbiD family.

It carries out the reaction Co-precorrin-5B + S-adenosyl-L-methionine = Co-precorrin-6A + S-adenosyl-L-homocysteine. The protein operates within cofactor biosynthesis; adenosylcobalamin biosynthesis; cob(II)yrinate a,c-diamide from sirohydrochlorin (anaerobic route): step 6/10. Functionally, catalyzes the methylation of C-1 in cobalt-precorrin-5B to form cobalt-precorrin-6A. In Methanocaldococcus jannaschii (strain ATCC 43067 / DSM 2661 / JAL-1 / JCM 10045 / NBRC 100440) (Methanococcus jannaschii), this protein is Cobalt-precorrin-5B C(1)-methyltransferase.